Reading from the N-terminus, the 84-residue chain is Small ribosomal subunit protein bS18 (84 aa).

It belongs to the bacterial ribosomal protein bS18 family. In terms of assembly, part of the 30S ribosomal subunit. Forms a tight heterodimer with protein bS6.

In terms of biological role, binds as a heterodimer with protein bS6 to the central domain of the 16S rRNA, where it helps stabilize the platform of the 30S subunit. The protein is Small ribosomal subunit protein bS18 of Helicobacter hepaticus (strain ATCC 51449 / 3B1).